We begin with the raw amino-acid sequence, 270 residues long: Release factor glutamine methyltransferase (270 aa).

Residues 113 to 117 (GTGSG), D136, and N177 each bind S-adenosyl-L-methionine. 177–180 (NPPY) contributes to the substrate binding site.

Belongs to the protein N5-glutamine methyltransferase family. PrmC subfamily.

The catalysed reaction is L-glutaminyl-[peptide chain release factor] + S-adenosyl-L-methionine = N(5)-methyl-L-glutaminyl-[peptide chain release factor] + S-adenosyl-L-homocysteine + H(+). Its function is as follows. Methylates the class 1 translation termination release factors RF1/PrfA and RF2/PrfB on the glutamine residue of the universally conserved GGQ motif. This chain is Release factor glutamine methyltransferase, found in Lactococcus lactis subsp. lactis (strain IL1403) (Streptococcus lactis).